We begin with the raw amino-acid sequence, 131 residues long: Large-conductance mechanosensitive channel (131 aa).

A run of 3 helical transmembrane segments spans residues Phe8–Gly28, Ile30–Ile50, and Gly67–Val87.

The protein belongs to the MscL family. Homopentamer.

The protein localises to the cell membrane. Channel that opens in response to stretch forces in the membrane lipid bilayer. May participate in the regulation of osmotic pressure changes within the cell. The polypeptide is Large-conductance mechanosensitive channel (Geobacillus kaustophilus (strain HTA426)).